A 208-amino-acid chain; its full sequence is uncharacterized protein (208 aa).

Helical transmembrane passes span 5–25 (VIGILVIIAIISVGFFQKEAW), 41–61 (MLLIAADVFFPIVPFALIAAL), 69–89 (ANGIWITLTGSMLGTILLFFL), 123–143 (VLLGRLIPVIPSLVMNVICGL), 150–170 (VFFFASLIGKIPNIVVVTIAG), and 176–196 (NKLLSISIYGTYILIIMLVIY).

The protein localises to the cell membrane. This is an uncharacterized protein from Bacillus subtilis (strain 168).